The following is a 164-amino-acid chain: MSDLCPPTAPFFGFMGAAVALIFANLGAAYGTAKSGVGVSSMGVMKPDLVMKSIIPVVMAGVLGIYGLIIAVIIGNGVKGPEGGKPQYSSFTGFAHLAAGLACGLSGMAAGIAIGIVGDAGVRASAQQAKLYVGMVLILIFAEALGLYGLIVGLILTSKEAPCS.

Residues 1 to 10 (MSDLCPPTAP) lie on the Lumenal side of the membrane. A helical transmembrane segment spans residues 11–31 (FFGFMGAAVALIFANLGAAYG). Topologically, residues 32-53 (TAKSGVGVSSMGVMKPDLVMKS) are cytoplasmic. Residues 54 to 74 (IIPVVMAGVLGIYGLIIAVII) traverse the membrane as a helical segment. Residues 75–96 (GNGVKGPEGGKPQYSSFTGFAH) are Lumenal-facing. The chain crosses the membrane as a helical span at residues 97–118 (LAAGLACGLSGMAAGIAIGIVG). Topologically, residues 119 to 130 (DAGVRASAQQAK) are cytoplasmic. Residues 131–155 (LYVGMVLILIFAEALGLYGLIVGLI) traverse the membrane as a helical segment. At 156 to 164 (LTSKEAPCS) the chain is on the lumenal side.

This sequence belongs to the V-ATPase proteolipid subunit family. V-ATPase is a heteromultimeric enzyme composed of a peripheral catalytic V1 complex (main components: subunits A, B, C, D, E, and F) attached to an integral membrane V0 proton pore complex (main component: the proteolipid protein; which is present as a hexamer that forms the proton-conducting pore).

It is found in the vacuole membrane. In terms of biological role, proton-conducting pore forming subunit of the membrane integral V0 complex of vacuolar ATPase. V-ATPase is responsible for acidifying a variety of intracellular compartments in eukaryotic cells. The sequence is that of V-type proton ATPase 16 kDa proteolipid subunit (VAP) from Chrysotila carterae (Marine alga).